Here is a 306-residue protein sequence, read N- to C-terminus: MNDLRQLRHFVALAEHGHFARAAEAVNLSQPALSRSIQALENGLGCRLLDRGPRQVSLTAHGRLVLEHARRLLDGDRALRSAVSQLDNLGSGELRLGAGPYPGARLVPRALGRFAGAHPGVRVQLAIDTWYSLHQRLLDDALELFVADVRELRDDPQLEVTPLRSWPGVIFCRPGHPLLGRRRHRLTAADLAAYPLAGTQVPAEVAQALGQLAESGQPLGIECDNFMALKALVAESDVLSMAPLDVVAEEIEAGRLALLELAPGLLSQRSAYGLVSRAGRTLSPAAEAMRGLILDEDARTPPASAR.

The region spanning 1 to 59 is the HTH lysR-type domain; sequence MNDLRQLRHFVALAEHGHFARAAEAVNLSQPALSRSIQALENGLGCRLLDRGPRQVSLT. A DNA-binding region (H-T-H motif) is located at residues 19–38; the sequence is FARAAEAVNLSQPALSRSIQ.

The protein belongs to the LysR transcriptional regulatory family.

Activates the transcription of the sdsA gene for sodium dodecyl sulfate (SDS) degradation. The sequence is that of SDS degradation transcriptional activation protein (sdsB) from Pseudomonas sp. (strain ATCC 19151).